Consider the following 278-residue polypeptide: 4-deoxy-L-threo-5-hexosulose-uronate ketol-isomerase (278 aa).

Positions 196, 198, 203, and 245 each coordinate Zn(2+).

It belongs to the KduI family. In terms of assembly, homohexamer. Zn(2+) serves as cofactor.

The enzyme catalyses 5-dehydro-4-deoxy-D-glucuronate = 3-deoxy-D-glycero-2,5-hexodiulosonate. The protein operates within glycan metabolism; pectin degradation; 2-dehydro-3-deoxy-D-gluconate from pectin: step 4/5. In terms of biological role, catalyzes the isomerization of 5-dehydro-4-deoxy-D-glucuronate to 3-deoxy-D-glycero-2,5-hexodiulosonate. The chain is 4-deoxy-L-threo-5-hexosulose-uronate ketol-isomerase from Escherichia coli O8 (strain IAI1).